A 360-amino-acid chain; its full sequence is Methylthioribose-1-phosphate isomerase (360 aa).

Catalysis depends on D246, which acts as the Proton donor.

The protein belongs to the eIF-2B alpha/beta/delta subunits family. MtnA subfamily.

It localises to the cytoplasm. Its subcellular location is the nucleus. The enzyme catalyses 5-(methylsulfanyl)-alpha-D-ribose 1-phosphate = 5-(methylsulfanyl)-D-ribulose 1-phosphate. Its pathway is amino-acid biosynthesis; L-methionine biosynthesis via salvage pathway; L-methionine from S-methyl-5-thio-alpha-D-ribose 1-phosphate: step 1/6. Functionally, catalyzes the interconversion of methylthioribose-1-phosphate (MTR-1-P) into methylthioribulose-1-phosphate (MTRu-1-P). This is Methylthioribose-1-phosphate isomerase from Aedes aegypti (Yellowfever mosquito).